Here is a 116-residue protein sequence, read N- to C-terminus: Iron-sulfur cluster insertion protein ErpA (116 aa).

3 residues coordinate iron-sulfur cluster: cysteine 44, cysteine 108, and cysteine 110.

This sequence belongs to the HesB/IscA family. Homodimer. The cofactor is iron-sulfur cluster.

In terms of biological role, required for insertion of 4Fe-4S clusters for at least IspG. In Francisella tularensis subsp. mediasiatica (strain FSC147), this protein is Iron-sulfur cluster insertion protein ErpA.